Reading from the N-terminus, the 1372-residue chain is DNA-directed RNA polymerase subunit beta'' (1372 aa).

The Zn(2+) site is built by cysteine 252, cysteine 321, cysteine 328, and cysteine 331.

Belongs to the RNA polymerase beta' chain family. RpoC2 subfamily. As to quaternary structure, in plastids the minimal PEP RNA polymerase catalytic core is composed of four subunits: alpha, beta, beta', and beta''. When a (nuclear-encoded) sigma factor is associated with the core the holoenzyme is formed, which can initiate transcription. Zn(2+) is required as a cofactor.

Its subcellular location is the plastid. It is found in the organellar chromatophore. It carries out the reaction RNA(n) + a ribonucleoside 5'-triphosphate = RNA(n+1) + diphosphate. Functionally, DNA-dependent RNA polymerase catalyzes the transcription of DNA into RNA using the four ribonucleoside triphosphates as substrates. This chain is DNA-directed RNA polymerase subunit beta'', found in Paulinella chromatophora.